The primary structure comprises 1919 residues: Disks large homolog 5 (1919 aa).

A disordered region spans residues 98–142; the sequence is AEGAGSTYSVLSTMPSDSESSSSLSSVGTTGKAPSPPPLLTDQQV. Over residues 109 to 123 the composition is skewed to low complexity; sequence STMPSDSESSSSLSS. 2 positions are modified to phosphoserine: Ser264 and Ser295. Residues 383 to 599 adopt a coiled-coil conformation; that stretch reads LNKATAQNKD…LEKEARFRQL (217 aa). 2 consecutive PDZ domains span residues 620–710 and 705–796; these read VVEF…RRRK and VVRR…LKVF. Position 900 is a phosphoserine (Ser900). 5 disordered regions span residues 927 to 1122, 1150 to 1187, 1201 to 1230, 1245 to 1264, and 1271 to 1306; these read GVGE…FRPK, QEWA…PSTT, SHRV…HQGR, EMRA…LGSS, and AERI…PQSP. Thr984 carries the post-translational modification Phosphothreonine. A Phosphoserine modification is found at Ser1000. The residue at position 1011 (Thr1011) is a Phosphothreonine. A compositionally biased stretch (basic and acidic residues) spans 1017-1030; sequence RRSDSIKFQHRLET. Ser1021 carries the post-translational modification Phosphoserine. Pro residues predominate over residues 1045–1055; it reads TSPPSALPPDV. Thr1183 is modified (phosphothreonine). 2 positions are modified to phosphoserine: Ser1209 and Ser1263. Low complexity-rich tracts occupy residues 1252–1264 and 1284–1298; these read SNSL…LGSS and RSVV…SHSE. The residue at position 1334 (Ser1334) is a Phosphoserine. Residues 1350-1429 form the PDZ 3 domain; that stretch reads HVKVQKGSEP…TITILAQYNP (80 aa). Residues 1434 to 1493 form a disordered region; the sequence is LSSHSRSSSHLDPAGTHSTLQGSGTTTPEHPSVIDPLMEQDEGPSTPPAKQSSSRIAGDA. Residues 1449-1462 are compositionally biased toward polar residues; that stretch reads THSTLQGSGTTTPE. The region spanning 1501–1582 is the PDZ 4 domain; sequence RVVFIKKSQL…GVRLKVQYRP (82 aa). Positions 1593–1661 constitute an SH3 domain; sequence GDSFYIRALY…PSKYVMDQEF (69 aa). At Ser1666 the chain carries Phosphoserine. The Guanylate kinase-like domain maps to 1722 to 1905; the sequence is DSVSLAYQRV…ICTQILAMVN (184 aa).

This sequence belongs to the MAGUK family. In terms of assembly, interacts with MPP1. Interacts with CTNNB1 and with the third SH3 domain of SORBS3 to form a ternary complex. Interacts (via coiled-coil domain) with MARK3. Interacts (via PDZ domain 3) with STK3/MST2 and STK4/MST1. Interacts with SCRIB. Interacts with CTNB1, SMO and (via PDZ4 or guanylate kinase-like domain) with KIF7. As to expression, highly expressed in normal breast tissues and low-grade breast cancer tissues (at protein level). Highly expressed in the placenta and prostate. Expressed at a lower level in the thyroid, spinal cord, trachea, adrenal gland, skeletal muscle, pancreas, heart, brain, liver and kidney. A short splice product shows more limited expression, being absent from at least the brain.

The protein resides in the cell junction. The protein localises to the cell membrane. Its subcellular location is the postsynaptic density. It is found in the cytoplasm. It localises to the cytoskeleton. The protein resides in the cilium basal body. Functionally, acts as a regulator of the Hippo signaling pathway. Negatively regulates the Hippo signaling pathway by mediating the interaction of MARK3 with STK3/4, bringing them together to promote MARK3-dependent hyperphosphorylation and inactivation of STK3 kinase activity toward LATS1. Positively regulates the Hippo signaling pathway by mediating the interaction of SCRIB with STK4/MST1 and LATS1 which is important for the activation of the Hippo signaling pathway. Involved in regulating cell proliferation, maintenance of epithelial polarity, epithelial-mesenchymal transition (EMT), cell migration and invasion. Plays an important role in dendritic spine formation and synaptogenesis in cortical neurons; regulates synaptogenesis by enhancing the cell surface localization of N-cadherin. Acts as a positive regulator of hedgehog (Hh) signaling pathway. Plays a critical role in the early point of the SMO activity cycle by interacting with SMO at the ciliary base to induce the accumulation of KIF7 and GLI2 at the ciliary tip for GLI2 activation. The chain is Disks large homolog 5 (DLG5) from Homo sapiens (Human).